The following is a 359-amino-acid chain: Alanine racemase, biosynthetic (359 aa).

Lysine 34 acts as the Proton acceptor; specific for D-alanine in catalysis. Position 34 is an N6-(pyridoxal phosphate)lysine (lysine 34). Residue arginine 129 coordinates substrate. Residue tyrosine 255 is the Proton acceptor; specific for L-alanine of the active site. Methionine 303 is a binding site for substrate.

The protein belongs to the alanine racemase family. It depends on pyridoxal 5'-phosphate as a cofactor.

It carries out the reaction L-alanine = D-alanine. Its pathway is amino-acid biosynthesis; D-alanine biosynthesis; D-alanine from L-alanine: step 1/1. It participates in cell wall biogenesis; peptidoglycan biosynthesis. Catalyzes the interconversion of L-alanine and D-alanine. Provides the D-alanine required for cell wall biosynthesis. The chain is Alanine racemase, biosynthetic (alr) from Escherichia coli O157:H7.